Consider the following 453-residue polypeptide: Adenosylmethionine-8-amino-7-oxononanoate aminotransferase (453 aa).

118–119 serves as a coordination point for pyridoxal 5'-phosphate; it reads GA. Tyrosine 151 provides a ligand contact to substrate. Aspartate 257 lines the pyridoxal 5'-phosphate pocket. Substrate-binding residues include lysine 286, glycine 321, and arginine 416. Lysine 286 bears the N6-(pyridoxal phosphate)lysine mark.

This sequence belongs to the class-III pyridoxal-phosphate-dependent aminotransferase family. BioA subfamily. As to quaternary structure, homodimer. Requires pyridoxal 5'-phosphate as cofactor.

The protein resides in the cytoplasm. The catalysed reaction is (8S)-8-amino-7-oxononanoate + S-adenosyl-L-methionine = S-adenosyl-4-methylsulfanyl-2-oxobutanoate + (7R,8S)-7,8-diammoniononanoate. It functions in the pathway cofactor biosynthesis; biotin biosynthesis; 7,8-diaminononanoate from 8-amino-7-oxononanoate (SAM route): step 1/1. Catalyzes the transfer of the alpha-amino group from S-adenosyl-L-methionine (SAM) to 7-keto-8-aminopelargonic acid (KAPA) to form 7,8-diaminopelargonic acid (DAPA). It is the only aminotransferase known to utilize SAM as an amino donor. This chain is Adenosylmethionine-8-amino-7-oxononanoate aminotransferase, found in Aquifex aeolicus (strain VF5).